The following is a 117-amino-acid chain: Fluoride-specific ion channel FluC 2 (117 aa).

4 helical membrane-spanning segments follow: residues 1-21 (MISI…RSAI), 33-53 (LPIA…LTIG), 60-80 (WFPA…STLA), and 95-115 (LFLN…YIGY). Residues glycine 71 and threonine 74 each contribute to the Na(+) site.

Belongs to the fluoride channel Fluc/FEX (TC 1.A.43) family.

It is found in the cell membrane. It catalyses the reaction fluoride(in) = fluoride(out). With respect to regulation, na(+) is not transported, but it plays an essential structural role and its presence is essential for fluoride channel function. In terms of biological role, fluoride-specific ion channel. Important for reducing fluoride concentration in the cell, thus reducing its toxicity. The polypeptide is Fluoride-specific ion channel FluC 2 (Staphylococcus aureus (strain COL)).